Consider the following 511-residue polypeptide: Alpha-amylase 1A (511 aa).

A signal peptide spans 1–15 (MKLFWLLFTIGFCWA). At Q16 the chain carries Pyrrolidone carboxylic acid. 3 cysteine pairs are disulfide-bonded: C43-C101, C85-C130, and C156-C175. Ca(2+) contacts are provided by N115, R173, and D182. R210 contacts chloride. D212 functions as the Nucleophile in the catalytic mechanism. H216 is a Ca(2+) binding site. E248 (proton donor) is an active-site residue. The chloride site is built by N313 and R352. Residue N365 is modified to Deamidated asparagine; partial. C393 and C399 are oxidised to a cystine. N427 bears the Deamidated asparagine; partial; alternate mark. N-linked (GlcNAc...) asparagine glycosylation occurs at N427. A disulfide bond links C465 and C477. Position 474 is a deamidated asparagine; partial (N474). N476 is a glycosylation site (N-linked (GlcNAc...) asparagine).

The protein belongs to the glycosyl hydrolase 13 family. In terms of assembly, monomer. The cofactor is Ca(2+). Chloride serves as cofactor.

The protein resides in the secreted. The catalysed reaction is Endohydrolysis of (1-&gt;4)-alpha-D-glucosidic linkages in polysaccharides containing three or more (1-&gt;4)-alpha-linked D-glucose units.. Its function is as follows. Calcium-binding enzyme that initiates starch digestion in the oral cavity. Catalyzes the hydrolysis of internal (1-&gt;4)-alpha-D-glucosidic bonds, yielding a mixture of maltose, isomaltose, small amounts of glucose as well as small linear and branched oligosaccharides called dextrins. The protein is Alpha-amylase 1A of Homo sapiens (Human).